The sequence spans 414 residues: Eukaryotic initiation factor 4A (414 aa).

The Q motif signature appears at 41 to 69 (ESFDDMGLQENLLRGIYAYGFEKPSAIQQ). Residues 72–242 (IVPFCKGLDV…RKFMNKPVRI (171 aa)) enclose the Helicase ATP-binding domain. 85–92 (AQSGTGKT) is a binding site for ATP. Positions 190–193 (DEAD) match the DEAD box motif. One can recognise a Helicase C-terminal domain in the interval 253-414 (GIKQFYVNVE…ELPANVADLL (162 aa)).

This sequence belongs to the DEAD box helicase family. eIF4A subfamily. EIF4F is a multi-subunit complex, the composition of which varies with external and internal environmental conditions. It is composed of at least EIF4A, EIF4E and EIF4G.

The enzyme catalyses ATP + H2O = ADP + phosphate + H(+). Its function is as follows. ATP-dependent RNA helicase which is a subunit of the eIF4F complex involved in cap recognition and is required for mRNA binding to ribosome. In the current model of translation initiation, eIF4A unwinds RNA secondary structures in the 5'-UTR of mRNAs which is necessary to allow efficient binding of the small ribosomal subunit, and subsequent scanning for the initiator codon. This chain is Eukaryotic initiation factor 4A, found in Triticum aestivum (Wheat).